The sequence spans 103 residues: UPF0145 protein NT01CX_0170 (103 aa).

The protein belongs to the UPF0145 family.

In Clostridium novyi (strain NT), this protein is UPF0145 protein NT01CX_0170.